We begin with the raw amino-acid sequence, 24 residues long: Gaegurin-6 (24 aa).

Residues C18 and C24 are joined by a disulfide bond.

The protein belongs to the frog skin active peptide (FSAP) family. Brevinin subfamily. Monomer. As to expression, expressed by the skin glands.

Its subcellular location is the secreted. Functionally, has a non-hemolytic activity. Has a broad spectrum of activity against both Gram-positive and Gram-negative bacteria, fungi and protozoa. The chain is Gaegurin-6 (GGN6) from Glandirana rugosa (Japanese wrinkled frog).